Consider the following 523-residue polypeptide: Dynein regulatory complex subunit 3 (523 aa).

LRR repeat units lie at residues 44 to 65 (DVLSLQLDFRNILRIDNLWQFE), 66 to 87 (NLRKLQLDNNIIEKIEGLENLA), 88 to 109 (HLVWLDLSFNNIETIEGLDTLV), 110 to 131 (NLEDLSLFNNRISKIDSLDALV), and 132 to 153 (KLQVLSLGNNRIDNMMNIIYLR). The region spanning 166–204 (NPISEAEDYKMFICAYLPDLMYLDYRRIDDHTKKLAEAK) is the LRRCT domain. Coiled coils occupy residues 208–242 (SIDELKHQENLMQAQLEDEQAQREELEKHKTAFVE) and 366–391 (MTLEMQLVEQLEETINMFERNIVDMV).

The protein belongs to the DRC3 family. As to quaternary structure, component of the nexin-dynein regulatory complex (N-DRC). Interacts with DRC1. Interacts with TCTE1/DRC5. Interacts with DRC7.

Its subcellular location is the cytoplasm. It is found in the cytoskeleton. The protein resides in the cilium axoneme. It localises to the cell projection. The protein localises to the cilium. Its subcellular location is the flagellum axoneme. It is found in the flagellum. Its function is as follows. Component of the nexin-dynein regulatory complex (N-DRC) a key regulator of ciliary/flagellar motility which maintains the alignment and integrity of the distal axoneme and regulates microtubule sliding in motile axonemes. This Homo sapiens (Human) protein is Dynein regulatory complex subunit 3 (DRC3).